The primary structure comprises 272 residues: Shikimate dehydrogenase (NADP(+)) (272 aa).

Shikimate contacts are provided by residues 14-16 (SKS) and T61. The active-site Proton acceptor is the K65. An NADP(+)-binding site is contributed by E77. Positions 86 and 102 each coordinate shikimate. NADP(+)-binding positions include 126–130 (GAGGA), 149–154 (NRTVSR), and M213. Y215 contacts shikimate. Residue G237 coordinates NADP(+).

It belongs to the shikimate dehydrogenase family. Homodimer.

It carries out the reaction shikimate + NADP(+) = 3-dehydroshikimate + NADPH + H(+). It participates in metabolic intermediate biosynthesis; chorismate biosynthesis; chorismate from D-erythrose 4-phosphate and phosphoenolpyruvate: step 4/7. Involved in the biosynthesis of the chorismate, which leads to the biosynthesis of aromatic amino acids. Catalyzes the reversible NADPH linked reduction of 3-dehydroshikimate (DHSA) to yield shikimate (SA). In Escherichia coli (strain K12 / MC4100 / BW2952), this protein is Shikimate dehydrogenase (NADP(+)).